The primary structure comprises 373 residues: MNMINYECKMQKIKLKTNLLNFDLQSMKKFFCSIGELEFRAQQVMKWIYQHYCDDFNKMTNISLQLRKKLSTLCCITPPKFLNHKVSVDGTMKWSVVIGNQCIETVCIPKNQRTTLCISSQLGCSLACSFCLTGQQGFNKNLNVSEIIGQVWYIQKLIYFSKINITNKITNVVLMGMGEPLLNLSNVVHALRIMLDEFGLNMSKNHITLSTAGIVPALKKLHTMIDVSLAVSLHASNNTIRNQLMPINKKYNIESVLCAIKKYLYYSNANKKRVTIEYVMLSGINDAAYHAEELFNLLKSIPHKINLIPWNHFSGSNYICSNDITINNFANILIKKGCIVTIRKIRGYDINAACGQLSGIVFDRKFNKINCIS.

The active-site Proton acceptor is Glu104. The Radical SAM core domain occupies 110–349 (KNQRTTLCIS…VTIRKIRGYD (240 aa)). Cysteines 117 and 354 form a disulfide. The [4Fe-4S] cluster site is built by Cys124, Cys128, and Cys131. Residues 178–179 (GE), Ser210, 232–234 (SLH), and Asn311 each bind S-adenosyl-L-methionine. Cys354 serves as the catalytic S-methylcysteine intermediate.

This sequence belongs to the radical SAM superfamily. RlmN family. [4Fe-4S] cluster is required as a cofactor.

It is found in the cytoplasm. It catalyses the reaction adenosine(2503) in 23S rRNA + 2 reduced [2Fe-2S]-[ferredoxin] + 2 S-adenosyl-L-methionine = 2-methyladenosine(2503) in 23S rRNA + 5'-deoxyadenosine + L-methionine + 2 oxidized [2Fe-2S]-[ferredoxin] + S-adenosyl-L-homocysteine. The enzyme catalyses adenosine(37) in tRNA + 2 reduced [2Fe-2S]-[ferredoxin] + 2 S-adenosyl-L-methionine = 2-methyladenosine(37) in tRNA + 5'-deoxyadenosine + L-methionine + 2 oxidized [2Fe-2S]-[ferredoxin] + S-adenosyl-L-homocysteine. Its function is as follows. Specifically methylates position 2 of adenine 2503 in 23S rRNA and position 2 of adenine 37 in tRNAs. m2A2503 modification seems to play a crucial role in the proofreading step occurring at the peptidyl transferase center and thus would serve to optimize ribosomal fidelity. This is Dual-specificity RNA methyltransferase RlmN from Buchnera aphidicola subsp. Baizongia pistaciae (strain Bp).